Reading from the N-terminus, the 77-residue chain is Conotoxin G11.1 (77 aa).

A signal peptide spans 1 to 20 (MKLFLAIVLILMLQFLSTGA). The propeptide occupies 21–45 (ETSDNHASRSTTALRDWLLGPKAKR). Cystine bridges form between Cys46–Cys60, Cys53–Cys65, Cys59–Cys69, and Cys64–Cys76.

This sequence belongs to the conotoxin I3 superfamily. Expressed by the venom duct.

The protein resides in the secreted. May embed in the membrane and bind to the voltage sensor domain of a ion channel. Does not induce paralysis when injected in fish, leading to the hypothesis that it may be part of the sedative nirvana cabal. This is Conotoxin G11.1 from Conus geographus (Geography cone).